The following is a 729-amino-acid chain: DNA gyrase subunit B, chloroplastic/mitochondrial (729 aa).

In terms of domain architecture, Toprim spans 510 to 617; it reads SEIFIVEGDS…RYQKALFDEG (108 aa). Positions 516, 590, and 592 each coordinate Mg(2+).

It belongs to the type II topoisomerase GyrB family. As to quaternary structure, made up of two chains. The A chain is responsible for DNA breakage and rejoining; the B chain catalyzes ATP hydrolysis. It depends on Mg(2+) as a cofactor. The cofactor is Mn(2+). Requires Ca(2+) as cofactor.

It localises to the plastid. Its subcellular location is the chloroplast. The protein localises to the mitochondrion. The enzyme catalyses ATP-dependent breakage, passage and rejoining of double-stranded DNA.. In terms of biological role, a type II topoisomerase that negatively supercoils closed circular double-stranded DNA in an ATP-dependent manner. The protein is DNA gyrase subunit B, chloroplastic/mitochondrial (GYRB) of Oryza sativa subsp. japonica (Rice).